Consider the following 306-residue polypeptide: MMIITTMQDAIGRTPVFKFTNKDYPIPLNSAIYAKLEHLNPGGSVKDRLGQYLIGEGFKTGKITSKTTIIEPTAGNTGIALALVAIKHHLKTIFVVPEKFSTEKQQIMRALGALVINTPTSEGISGAIKKSKELAESIPDSYLPLQFENPDNPAAYYHTLAPEIVQELGTNLTSFVAGIGSGGTFAGTARYLKERIPAIRLIGVEPEGSILNGGEPGPHEIEGIGVEFIPPFFENLDIDGFETISDEEGFSYTRKLAKKNGLLVGSSSGAAFVAALKEAQRLPEGSQVLTIFPDVADRYLSKGIYL.

Position 46 is an N6-(pyridoxal phosphate)lysine (lysine 46). Pyridoxal 5'-phosphate contacts are provided by residues asparagine 76, 180-184 (GSGGT), and serine 267.

Belongs to the cysteine synthase/cystathionine beta-synthase family. In terms of assembly, homodimer. Pyridoxal 5'-phosphate serves as cofactor.

It carries out the reaction O-acetyl-L-serine + hydrogen sulfide = L-cysteine + acetate. It functions in the pathway amino-acid biosynthesis; L-cysteine biosynthesis; L-cysteine from L-serine: step 2/2. The sequence is that of Cysteine synthase (cysM) from Helicobacter pylori (strain ATCC 700392 / 26695) (Campylobacter pylori).